The sequence spans 643 residues: Pseudouridylate synthase PUS7L (643 aa).

Asp-284 (nucleophile) is an active-site residue. The TRUD domain occupies Gly-370–Lys-597.

The protein belongs to the pseudouridine synthase TruD family.

The catalysed reaction is a uridine in mRNA = a pseudouridine in mRNA. Pseudouridine synthase that catalyzes pseudouridylation of mRNAs. This chain is Pseudouridylate synthase PUS7L (pus7l), found in Danio rerio (Zebrafish).